The sequence spans 604 residues: Protein CBFA2T2 (604 aa).

The tract at residues 25-105 (KRVPAMPGSP…SSTSSALTNQ (81 aa)) is disordered. The residue at position 33 (serine 33) is a Phosphoserine. Lysine 38 participates in a covalent cross-link: Glycyl lysine isopeptide (Lys-Gly) (interchain with G-Cter in SUMO2). The segment covering 46 to 59 (PTMPPLPPINPGGP) has biased composition (pro residues). Composition is skewed to polar residues over residues 64 to 79 (FTPT…SPPT) and 88 to 105 (QRFS…LTNQ). Residues 107 to 215 (LPATCGARQL…QHEHLLLNTS (109 aa)) form an interaction with PRDM14 region. The TAFH domain occupies 113–208 (ARQLSKLKRF…TPSQYLAQHE (96 aa)). Positions 229–265 (VHGNGKRPSPERREENSFDRDTIAPEPPAKRVCTISP) are disordered. Basic and acidic residues predominate over residues 236–251 (PSPERREENSFDRDTI). Serine 264 carries the post-translational modification Phosphoserine. The interval 331–377 (QDELVDHRLTEREWADEWKHLDHALNCIMEMVEKTRRSMAVLRRCQE) is nervy homology region 2 (NHR2). Residues 397-427 (RKTGTELVSRQHSPGSADSLSNDSQREFNSR) form a disordered region. A compositionally biased stretch (polar residues) spans 402–419 (ELVSRQHSPGSADSLSND). At serine 409 the chain carries Phosphoserine. A nervy homology region 3 (NHR3) region spans residues 435 to 484 (VEFWKKTEEAVNKVKIQAMSEVQKAVAEAEQKAFEVIATERARMEQTIAD). A Glycyl lysine isopeptide (Lys-Gly) (interchain with G-Cter in SUMO2) cross-link involves residue lysine 449. Residues 451 to 491 (QAMSEVQKAVAEAEQKAFEVIATERARMEQTIADVKRQAAE) adopt a coiled-coil conformation. Cysteine 507, cysteine 510, cysteine 518, cysteine 521, cysteine 527, cysteine 531, histidine 539, and cysteine 543 together coordinate Zn(2+). An MYND-type zinc finger spans residues 507–543 (CWNCGRKASETCSGCNIARYCGSFCQHKDWERHHRLC). The segment at 547–604 (LHGQSPHGQGRPLLPVGRGSSARSADCSVPSPALDKTSATTSRSSTPASVTAIDTNGL) is disordered. At serine 577 the chain carries Phosphoserine. The segment covering 583-598 (TSATTSRSSTPASVTA) has biased composition (low complexity).

It belongs to the CBFA2T family. As to quaternary structure, homooligomer. Homotetramerization is mediated by nervy homology region 2. Can interact with RUNX1T1/CBFA2T1 and CBFA2T3/MTG16; heterotetramerization between members of the CBFA2T family is proposed. Forms a heterooligomer with the AML1-MTG8/ETO fusion protein. Interacts with PRDM14. Interacts with RBPJ, GFI1, TCF4. Interacts with TAL1 and CBFA2T3/MTG16; the heteromer with CBFA2T3/MTG16 may function in repression of TAL1. Ubiquitously expressed in fetal and adult tissues. Highly expressed in adult brain, heart, lung, kidney, lymph node, appendix, thymus, testis, uterus, small intestine, prostate and thymus.

It localises to the nucleus. Transcriptional corepressor which facilitates transcriptional repression via its association with DNA-binding transcription factors and recruitment of other corepressors and histone-modifying enzymes. Via association with PRDM14 is involved in regulation of embryonic stem cell (ESC) pluripotency. Involved in primordial germ cell (PCG) formation. Stabilizes PRDM14 and OCT4 on chromatin in a homooligomerization-dependent manner. Can repress the expression of MMP7 in a ZBTB33-dependent manner. May function as a complex with the chimeric protein RUNX1/AML1-CBFA2T1/MTG8 (AML1-MTG8/ETO fusion protein) which is produced in acute myeloid leukemia with the chromosomal translocation t(8;21). May thus be involved in the repression of AML1-dependent transcription and the induction of G-CSF/CSF3-dependent cell growth. May be a tumor suppressor gene candidate involved in myeloid tumors with the deletion of the 20q11 region. Through heteromerization with CBFA2T3/MTG16 may be involved in regulation of the proliferation and the differentiation of erythroid progenitors by repressing the expression of TAL1 target genes. Required for the maintenance of the secretory cell lineage in the small intestine. Can inhibit Notch signaling probably by association with RBPJ and may be involved in GFI1-mediated Paneth cell differentiation. The polypeptide is Protein CBFA2T2 (CBFA2T2) (Homo sapiens (Human)).